The chain runs to 96 residues: Protein C4 (96 aa).

A lipid anchor (N-myristoyl glycine; by host) is attached at glycine 2. The interval 66–96 (STDDLQGEDSRQPMTLTPRQLTQDVSRRLLM) is disordered. Residues 77-89 (QPMTLTPRQLTQD) are compositionally biased toward polar residues.

Belongs to the geminiviridae protein AC4/C4 family.

The protein resides in the host cell membrane. In terms of biological role, pathogenicity determinant. May act as a suppressor of RNA-mediated gene silencing, also known as post-transcriptional gene silencing (PTGS), a mechanism of plant viral defense that limits the accumulation of viral RNAs. This chain is Protein C4, found in Solanum lycopersicum (Tomato).